The chain runs to 451 residues: Ammonium transporter Rh type B (451 aa).

At 1–11 the chain is on the cytoplasmic side; sequence MADVSTSMRLK. The helical transmembrane segment at 12-32 threads the bilayer; it reads LPVVCFILEIILIILFGALVQ. Over 33-63 the chain is Extracellular; it reads YDYETDAKEWHNQSHNDYENDFYFRYPSFQD. N-linked (GlcNAc...) asparagine glycosylation occurs at asparagine 44. The chain crosses the membrane as a helical span at residues 64-84; it reads VHVMIFIGFGFLMTFLQKYGF. At 85-87 the chain is on the cytoplasmic side; it reads GSV. The helical transmembrane segment at 88–108 threads the bilayer; sequence GFNFLIAAFSLQWATLMQGFF. Topologically, residues 109–121 are extracellular; that stretch reads HGMHGGKIHVGVE. The chain crosses the membrane as a helical span at residues 122-142; the sequence is SMINADFCTGSVLISFGAVLG. The Cytoplasmic portion of the chain corresponds to 143–151; it reads KTSPIQLLT. A helical membrane pass occupies residues 152-172; the sequence is MAMFEVTLFAVNEFILLSLLG. Residues 173–176 lie on the Extracellular side of the membrane; it reads TRDA. The chain crosses the membrane as a helical span at residues 177–197; sequence GGSMTIHTFGAYFGLMVTRIL. Over 198 to 216 the chain is Cytoplasmic; the sequence is YRPHLDKSKHRNSSVYHSD. Residues 217–237 traverse the membrane as a helical segment; sequence LFAMIGTIYLWMFWPSFNSAI. Topologically, residues 238-247 are extracellular; that stretch reads TAHGDDQHRT. The helical transmembrane segment at 248 to 270 threads the bilayer; sequence ALNTYYSLAACTLATYGMSAVTS. Residues 271–274 lie on the Cytoplasmic side of the membrane; it reads HDGK. Residues 275-295 form a helical membrane-spanning segment; it reads LDMVHIQNAALAGGVAVGTAG. The Extracellular portion of the chain corresponds to 296–298; sequence EMM. A helical transmembrane segment spans residues 299–319; that stretch reads LTPFGSMIVGFLAGIISVLGF. Topologically, residues 320–340 are cytoplasmic; the sequence is KFLSPILESKLKIQDTCGVHN. The chain crosses the membrane as a helical span at residues 341–361; it reads LHGMPGVLGAIVGAVTAALAT. The Extracellular segment spans residues 362–390; it reads MDVYGKGMEDVFPAVADGSIDASKQGGVQ. Residues 391–411 traverse the membrane as a helical segment; that stretch reads ALSLAITLGIALLGGLIVVFG. Over 412–451 the chain is Cytoplasmic; it reads TPPDTLCFEDGVYWEVPESEAPHEAQLTTVRTEETEKLSS.

The protein belongs to the ammonium transporter (TC 2.A.49) family. Rh subfamily.

The protein localises to the basolateral cell membrane. It localises to the cytoplasmic vesicle membrane. In terms of biological role, functions as an ammonia transporter. May play a role in the elimination of ammonia in the gill. The chain is Ammonium transporter Rh type B (rhbg) from Tetraodon nigroviridis (Spotted green pufferfish).